A 931-amino-acid chain; its full sequence is Phosphoenolpyruvate carboxylase (931 aa).

Residues H138 and K594 contribute to the active site.

Belongs to the PEPCase type 1 family. Requires Mg(2+) as cofactor.

It catalyses the reaction oxaloacetate + phosphate = phosphoenolpyruvate + hydrogencarbonate. In terms of biological role, forms oxaloacetate, a four-carbon dicarboxylic acid source for the tricarboxylic acid cycle. This is Phosphoenolpyruvate carboxylase from Streptococcus agalactiae serotype III (strain NEM316).